A 272-amino-acid chain; its full sequence is 4-hydroxy-tetrahydrodipicolinate reductase (272 aa).

NAD(+)-binding positions include 11–16 (GVSGRM) and E37. R38 serves as a coordination point for NADP(+). Residues 101 to 103 (GTT) and 125 to 128 (AGNM) each bind NAD(+). The active-site Proton donor/acceptor is H158. H159 is a binding site for (S)-2,3,4,5-tetrahydrodipicolinate. The active-site Proton donor is K162. Position 168–169 (168–169 (GT)) interacts with (S)-2,3,4,5-tetrahydrodipicolinate.

This sequence belongs to the DapB family.

The protein localises to the cytoplasm. It carries out the reaction (S)-2,3,4,5-tetrahydrodipicolinate + NAD(+) + H2O = (2S,4S)-4-hydroxy-2,3,4,5-tetrahydrodipicolinate + NADH + H(+). The catalysed reaction is (S)-2,3,4,5-tetrahydrodipicolinate + NADP(+) + H2O = (2S,4S)-4-hydroxy-2,3,4,5-tetrahydrodipicolinate + NADPH + H(+). It participates in amino-acid biosynthesis; L-lysine biosynthesis via DAP pathway; (S)-tetrahydrodipicolinate from L-aspartate: step 4/4. Its function is as follows. Catalyzes the conversion of 4-hydroxy-tetrahydrodipicolinate (HTPA) to tetrahydrodipicolinate. This chain is 4-hydroxy-tetrahydrodipicolinate reductase, found in Roseobacter denitrificans (strain ATCC 33942 / OCh 114) (Erythrobacter sp. (strain OCh 114)).